The following is a 412-amino-acid chain: Protein arginine N-methyltransferase 2 (412 aa).

Residues 190–412 enclose the RMT2 domain; sequence TAADPDTYLN…YYYHPKISFA (223 aa). S-adenosyl-L-methionine-binding positions include tyrosine 197, methionine 227, 250 to 255, 271 to 273, 298 to 299, and aspartate 319; these read FGMGII, EAH, and WQ.

Belongs to the class I-like SAM-binding methyltransferase superfamily. RMT2 methyltransferase family. As to quaternary structure, monomer.

It is found in the cytoplasm. The protein resides in the nucleus. Functionally, S-adenosyl-L-methionine-dependent protein-arginine N-methyltransferase that methylates the delta-nitrogen atom of arginine residues to form N5-methylarginine (type IV) in target proteins. Monomethylates ribosomal protein L12. This chain is Protein arginine N-methyltransferase 2, found in Candida glabrata (strain ATCC 2001 / BCRC 20586 / JCM 3761 / NBRC 0622 / NRRL Y-65 / CBS 138) (Yeast).